The chain runs to 263 residues: Acyl-[acyl-carrier-protein]--UDP-N-acetylglucosamine O-acyltransferase (263 aa).

This sequence belongs to the transferase hexapeptide repeat family. LpxA subfamily. In terms of assembly, homotrimer.

The protein resides in the cytoplasm. The enzyme catalyses a (3R)-hydroxyacyl-[ACP] + UDP-N-acetyl-alpha-D-glucosamine = a UDP-3-O-[(3R)-3-hydroxyacyl]-N-acetyl-alpha-D-glucosamine + holo-[ACP]. The protein operates within glycolipid biosynthesis; lipid IV(A) biosynthesis; lipid IV(A) from (3R)-3-hydroxytetradecanoyl-[acyl-carrier-protein] and UDP-N-acetyl-alpha-D-glucosamine: step 1/6. Involved in the biosynthesis of lipid A, a phosphorylated glycolipid that anchors the lipopolysaccharide to the outer membrane of the cell. This chain is Acyl-[acyl-carrier-protein]--UDP-N-acetylglucosamine O-acyltransferase, found in Stenotrophomonas maltophilia (strain K279a).